Consider the following 115-residue polypeptide: Large ribosomal subunit protein bL19 (115 aa).

It belongs to the bacterial ribosomal protein bL19 family.

Its function is as follows. This protein is located at the 30S-50S ribosomal subunit interface and may play a role in the structure and function of the aminoacyl-tRNA binding site. In Francisella philomiragia subsp. philomiragia (strain ATCC 25017 / CCUG 19701 / FSC 153 / O#319-036), this protein is Large ribosomal subunit protein bL19.